A 265-amino-acid chain; its full sequence is Protein HesA, vegetative (265 aa).

Belongs to the HesA/MoeB/ThiF family.

In Trichormus variabilis (strain ATCC 29413 / PCC 7937) (Anabaena variabilis), this protein is Protein HesA, vegetative (hesA2).